The following is a 616-amino-acid chain: MAHEVHRIKPKLGRTQIFWVFLAFRVLNAVLTRTFFQADEFWQALEPAHWKAFKYGELTWEWKFGVRSYLFPMIFELTYRLVSLSSILLHYALLLLSTIGSDLLILLLPKYELSWQVAEDLKRLPFDVTRSFEYYGVIYAPKIVMAVLASIGEYYIVRFVQKLYLLTLDKRNEKEEEERRSGLSEITKFALLLSLTNFFNCFFITRTFINSFEMILTSIALYYWDWTGGQMIKESSFTKSLIFAFLACLQRPSSGLIWVIPSISLILNLVGKKQYHLLFITFSKVLRSFFLVFTANAIIDMYFYEKVTFPFFRFLKFNFTTPLSKFYGVAPWHFHFFQSLPIVLGASIPAFAFGLFFPLSKRSFPKKYLNPFFQVKLTILLNLLVYSTLPHKEFRFIFPLQPLFILISSFGLLRLDRDYWKRLSGLKSLLWLVPFVSVFIALLLDTFHESGSIEVMKFLHEEPEIDSLGFIMPCHSTPGQSYLHRSDIQDLWSITCNPPLHLLGDPEAYSKLETYMDESDHLYDDISAFIYKNFPPPFRKDLRSPGKTYSHEWPTYLVVFEHMENAFLKDFLKDSSYIEYNRFFNSLAHWDSRRSGDIIIYYKLPFDYSDIPAADI.

Residues 1–16 (MAHEVHRIKPKLGRTQ) are Cytoplasmic-facing. Residues 17-37 (IFWVFLAFRVLNAVLTRTFFQ) form a helical membrane-spanning segment. The Lumenal segment spans residues 38–86 (ADEFWQALEPAHWKAFKYGELTWEWKFGVRSYLFPMIFELTYRLVSLSS). Residues 87–107 (ILLHYALLLLSTIGSDLLILL) form a helical membrane-spanning segment. Over 108–136 (LPKYELSWQVAEDLKRLPFDVTRSFEYYG) the chain is Cytoplasmic. A helical membrane pass occupies residues 137 to 157 (VIYAPKIVMAVLASIGEYYIV). At 158–188 (RFVQKLYLLTLDKRNEKEEEERRSGLSEITK) the chain is on the lumenal side. Residues 189-209 (FALLLSLTNFFNCFFITRTFI) form a helical membrane-spanning segment. The Cytoplasmic segment spans residues 210-240 (NSFEMILTSIALYYWDWTGGQMIKESSFTKS). Residues 241–261 (LIFAFLACLQRPSSGLIWVIP) form a helical membrane-spanning segment. Residues 262-278 (SISLILNLVGKKQYHLL) lie on the Lumenal side of the membrane. Residues 279–299 (FITFSKVLRSFFLVFTANAII) traverse the membrane as a helical segment. At 300–338 (DMYFYEKVTFPFFRFLKFNFTTPLSKFYGVAPWHFHFFQ) the chain is on the cytoplasmic side. The helical transmembrane segment at 339–359 (SLPIVLGASIPAFAFGLFFPL) threads the bilayer. The Lumenal portion of the chain corresponds to 360–392 (SKRSFPKKYLNPFFQVKLTILLNLLVYSTLPHK). A helical membrane pass occupies residues 393–413 (EFRFIFPLQPLFILISSFGLL). Residues 414 to 423 (RLDRDYWKRL) are Cytoplasmic-facing. Residues 424–444 (SGLKSLLWLVPFVSVFIALLL) form a helical membrane-spanning segment. The Lumenal portion of the chain corresponds to 445 to 616 (DTFHESGSIE…DYSDIPAADI (172 aa)).

This sequence belongs to the glycosyltransferase 22 family. PIGB subfamily.

It is found in the endoplasmic reticulum membrane. It participates in glycolipid biosynthesis; glycosylphosphatidylinositol-anchor biosynthesis. In terms of biological role, mannosyltransferase involved in glycosylphosphatidylinositol-anchor biosynthesis. Transfers the third mannose to Man2-GlcN-acyl-PI during GPI precursor assembly. The polypeptide is GPI mannosyltransferase 3 (GPI10) (Saccharomyces cerevisiae (strain ATCC 204508 / S288c) (Baker's yeast)).